Here is an 861-residue protein sequence, read N- to C-terminus: Glucans biosynthesis glucosyltransferase H (861 aa).

Helical transmembrane passes span 142–162 (FILL…MKGI), 188–208 (VLPY…FCWV), 516–536 (VFLT…FLVL), 573–593 (LFST…MLIW), 600–620 (FGGV…SVLL), and 683–703 (FLWW…VSVI).

This sequence belongs to the glycosyltransferase 2 family. OpgH subfamily.

Its subcellular location is the cell inner membrane. The protein operates within glycan metabolism; osmoregulated periplasmic glucan (OPG) biosynthesis. In terms of biological role, involved in the biosynthesis of osmoregulated periplasmic glucans (OPGs). In Pseudomonas aeruginosa (strain LESB58), this protein is Glucans biosynthesis glucosyltransferase H.